The sequence spans 462 residues: UDP-N-acetylmuramoylalanine--D-glutamate ligase (462 aa).

Position 109–115 (Gly-109–Thr-115) interacts with ATP.

Belongs to the MurCDEF family.

The protein localises to the cytoplasm. It catalyses the reaction UDP-N-acetyl-alpha-D-muramoyl-L-alanine + D-glutamate + ATP = UDP-N-acetyl-alpha-D-muramoyl-L-alanyl-D-glutamate + ADP + phosphate + H(+). The protein operates within cell wall biogenesis; peptidoglycan biosynthesis. Its function is as follows. Cell wall formation. Catalyzes the addition of glutamate to the nucleotide precursor UDP-N-acetylmuramoyl-L-alanine (UMA). In Leptospira borgpetersenii serovar Hardjo-bovis (strain JB197), this protein is UDP-N-acetylmuramoylalanine--D-glutamate ligase.